A 235-amino-acid polypeptide reads, in one-letter code: uncharacterized protein (235 aa).

2 disordered regions span residues 20-64 and 140-164; these read IHPN…LPIK and SQFF…NFDQ. Low complexity-rich tracts occupy residues 30–60 and 140–161; these read NNNN…SNNN and SQFF…NNKN. Positions 174–213 form a coiled coil; it reads KYMEFLSDIEQLNSDLKESKDNLESISIEMVLLETRLKGL.

This is an uncharacterized protein from Dictyostelium discoideum (Social amoeba).